A 233-amino-acid polypeptide reads, in one-letter code: Bcl-2-like protein 1 (233 aa).

The BH4 motif lies at 4–24 (SNRELVVDFLSYKLSQKGYSW). A disordered region spans residues 28–71 (SDVEENRTEAPEGTESEMETPSAINGNPSWHLADSPAVNGATGH). Residue Ser49 is modified to Phosphoserine; by PLK3. Phosphoserine; by CDK1 is present on Ser62. A BH3 motif is present at residues 86–100 (VKQALREAGDEFELR). A BH1 motif is present at residues 129–148 (ELFRDGVNWGRIVAFFSFGG). A BH2 motif is present at residues 180-195 (PWIQENGGWDTFVELY). Residues 210–226 (FNRWFLTGMTVAGVVLL) traverse the membrane as a helical segment.

It belongs to the Bcl-2 family. As to quaternary structure, homodimer. Interacts with BCL2L11. Interacts with BAD. Interacts with PGAM5. Interacts with HEBP2. Interacts with p53/TP53 and BBC3; interaction with BBC3 disrupts the interaction with p53/TP53. Interacts with ATP5F1A and ATP5F1B; the interactions mediate the association of isoform Bcl-X(L) with the mitochondrial membrane ATP synthase F(1)F(0) ATP synthase. Interacts with VDAC1. Interacts with BCL2L11 (via BH3). Interacts with RNF183. Interacts with GIMAP3/IAN4 and GIMAP5/IAN5. Interacts with GIMAP5 and HSPA8/HSC70; the interaction between HSPA8 and BCL2L1 is impaired in the absence of GIMAP5. Interacts with isoform 4 of CLU; this interaction releases and activates BAX and promotes cell death. Forms heterodimers with BAX, BAK or BCL2; heterodimerization with BAX does not seem to be required for anti-apoptotic activity. Interacts with isoform 1 of SIVA1; the interaction inhibits the anti-apoptotic activity. Interacts with IKZF3. Interacts with RTL10/BOP. Interacts with DNM1L and CLTA; DNM1L and BCL2L1 isoform BCL-X(L) may form a complex in synaptic vesicles that also contains clathrin and MFF. Interacts (via the loop between motifs BH4 and BH3) with NLRP1 (via LRR repeats), but not with NLRP2, NLRP3, NLRP4, PYCARD, nor MEFV. Interacts with BECN1. Proteolytically cleaved by caspases during apoptosis. The cleaved protein, lacking the BH4 motif, has pro-apoptotic activity. In terms of processing, phosphorylated on Ser-62 by CDK1. This phosphorylation is partial in normal mitotic cells, but complete in G2-arrested cells upon DNA-damage, thus promoting subsequent apoptosis probably by triggering caspases-mediated proteolysis. Phosphorylated by PLK3, leading to regulate the G2 checkpoint and progression to cytokinesis during mitosis. Phosphorylation at Ser-49 appears during the S phase and G2, disappears rapidly in early mitosis during prometaphase, metaphase and early anaphase, and re-appears during telophase and cytokinesis. Post-translationally, ubiquitinated by RNF183 during prolonged ER stress, leading to degradation by the proteosome. Bcl-X(S) is expressed at high levels in cells that undergo a high rate of turnover, such as developing lymphocytes. In contrast, Bcl-X(L) is found in tissues containing long-lived postmitotic cells, such as adult brain.

It localises to the mitochondrion inner membrane. Its subcellular location is the mitochondrion outer membrane. The protein localises to the mitochondrion matrix. It is found in the cytoplasmic vesicle. The protein resides in the secretory vesicle. It localises to the synaptic vesicle membrane. Its subcellular location is the cytoplasm. The protein localises to the cytosol. It is found in the cytoskeleton. The protein resides in the microtubule organizing center. It localises to the centrosome. Its subcellular location is the nucleus membrane. Potent inhibitor of cell death. Inhibits activation of caspases. Appears to regulate cell death by blocking the voltage-dependent anion channel (VDAC) by binding to it and preventing the release of the caspase activator, CYC1, from the mitochondrial membrane. Also acts as a regulator of G2 checkpoint and progression to cytokinesis during mitosis. Functionally, isoform Bcl-X(L) also regulates presynaptic plasticity, including neurotransmitter release and recovery, number of axonal mitochondria as well as size and number of synaptic vesicle clusters. During synaptic stimulation, increases ATP availability from mitochondria through regulation of mitochondrial membrane ATP synthase F(1)F(0) activity and regulates endocytic vesicle retrieval in hippocampal neurons through association with DMN1L and stimulation of its GTPase activity in synaptic vesicles. May attenuate inflammation impairing NLRP1-inflammasome activation, hence CASP1 activation and IL1B release. Its function is as follows. Isoform Bcl-X(S) promotes apoptosis. In Homo sapiens (Human), this protein is Bcl-2-like protein 1 (BCL2L1).